The following is a 120-amino-acid chain: Large ribosomal subunit protein bL19 (120 aa).

The protein belongs to the bacterial ribosomal protein bL19 family.

This protein is located at the 30S-50S ribosomal subunit interface and may play a role in the structure and function of the aminoacyl-tRNA binding site. This chain is Large ribosomal subunit protein bL19, found in Nostoc punctiforme (strain ATCC 29133 / PCC 73102).